The primary structure comprises 426 residues: MTKSEQLFERAVKHLPGGVNSPVRAFLSVGGSPRFIESADGAYIYDVDGNKYIDYINSWGPMILGHNHEVIRTAVIEAAQKGLSYGAATEAEVEMAELLCEIVPCFEMVRMVNSGTEAVMSAIRAARGYTKRNKIIKFEGCYHGHSDGLLVKAGSGVMVAGIPDSMGVPSNCVKDTLQAKYNNLDSVIELFKQNKDEIAAIIVEPVAANMGVVLPEEGFLEGLRELCTKHGALLIFDEVITGFRLSLSGAQGYYNIIPDLATFGKIIGGGMPVGCYGGRREIMEMVAPVGPVYQAGTLSGNPVAMAAGMAQLKYLKEHPEVYTKINELGEYFRNKVNELFDKYNIKYQVSGVGSLACIFFADSRVTDYETAKLADTKEFARYFRFMLEHGIYIAPAQFEAMFFSNAHTYQDIEDTLLVIEQYLKIQ.

Residue K265 is modified to N6-(pyridoxal phosphate)lysine.

The protein belongs to the class-III pyridoxal-phosphate-dependent aminotransferase family. HemL subfamily. Homodimer. Pyridoxal 5'-phosphate is required as a cofactor.

It localises to the cytoplasm. The enzyme catalyses (S)-4-amino-5-oxopentanoate = 5-aminolevulinate. It participates in porphyrin-containing compound metabolism; protoporphyrin-IX biosynthesis; 5-aminolevulinate from L-glutamyl-tRNA(Glu): step 2/2. This is Glutamate-1-semialdehyde 2,1-aminomutase 2 from Lachnoclostridium phytofermentans (strain ATCC 700394 / DSM 18823 / ISDg) (Clostridium phytofermentans).